Consider the following 35-residue polypeptide: Sorbin and SH3 domain-containing protein 1 (35 aa).

Residues 1 to 8 (LNRDDDSD) form the SoHo domain. The residue at position 15 (S15) is a Phosphoserine. The SH3 domain maps to 22–35 (CDDGWFVGTSRRTK).

Interacts with the long isoform of AFDN and with VCL. AFDN and VCL bind to SORBS1 in a competitive manner and do not form a ternary complex. Interacts with ABL1, CBL, CBLB and INPPL1/SHIP2 through the third SH3 domain. Interaction with ABL1 occurs only after insulin stimulation while this has no effect on the interaction with INPPL1. Interacts with the insulin receptor but dissociates from it following insulin stimulation. Also interacts with SCA7, PTK2/FAK1 and flotillin. Interacts (via SH3 domain 2) with PXN. Interacts (via third SH3 domain) with the Ten-1 ICD form of TENM1; the interaction induces the translocation of SORBS1 to the nucleus. Post-translationally, O-glycosylated.

The protein resides in the cell junction. Its subcellular location is the adherens junction. It is found in the cell membrane. The protein localises to the cytoplasm. It localises to the cytoskeleton. The protein resides in the focal adhesion. Its subcellular location is the nucleus. It is found in the nucleus matrix. In terms of biological role, plays a role in tyrosine phosphorylation of CBL by linking CBL to the insulin receptor. Required for insulin-stimulated glucose transport. Involved in formation of actin stress fibers and focal adhesions. The protein is Sorbin and SH3 domain-containing protein 1 of Rattus norvegicus (Rat).